Consider the following 225-residue polypeptide: Transmembrane protein C16orf54 homolog (225 aa).

Residues 34-54 (IPIMLGLASLTAFFIITTAVL) traverse the membrane as a helical segment. The interval 107–149 (RAPDPPTPGGTLEGRATAPPAIPTPHPSPSSLVPQTPPEVPAQ) is disordered. A phosphothreonine mark is found at Thr113 and Thr117. Position 195 is a phosphoserine (Ser195).

The protein resides in the membrane. This chain is Transmembrane protein C16orf54 homolog, found in Rattus norvegicus (Rat).